A 192-amino-acid polypeptide reads, in one-letter code: Thiamine transporter ThiT (192 aa).

The next 6 membrane-spanning stretches (helical) occupy residues 10–30 (LIEIAIMTAAAVILDIVSGMF), 31–51 (LSMPQGGSVSIMMIPIFLISF), 57–77 (AGLTTGLLTGLVQIAIGNLFA), 81–101 (VQLLLDYIVAFAAIGISGCFA), 123–143 (AVFIGSLLRYAAHVISGAVFF), and 164–184 (YMVPSFIICAIVLCLLFMTAP).

Belongs to the vitamin uptake transporter (VUT/ECF) (TC 2.A.88) family. Thiamine transporter subfamily. Forms a stable energy-coupling factor (ECF) transporter complex composed of a membrane-embedded substrate-binding protein (S component), two ATP-binding proteins (A components) and a transmembrane protein (T component).

The protein localises to the cell membrane. Its function is as follows. Probably a thiamine-binding protein that interacts with the energy-coupling factor (ECF) ABC-transporter complex. Unlike classic ABC transporters this ECF transporter provides the energy necessary to transport a number of different substrates. The substrates themselves are bound by transmembrane, not extracytoplasmic soluble proteins. The chain is Thiamine transporter ThiT (thiT) from Bacillus subtilis (strain 168).